A 99-amino-acid polypeptide reads, in one-letter code: Class II hydrophobin 2 (99 aa).

Positions 1-15 (MKFFVVAALFAGALA) are cleaved as a signal peptide. 2 disulfides stabilise this stretch: Cys30–Cys79 and Cys40–Cys70.

The protein belongs to the cerato-ulmin hydrophobin family. As to quaternary structure, homotetramer. Further self-assembles to form highly ordered films at water-air interfaces through intermolecular interactions.

The protein localises to the secreted. The protein resides in the cell wall. Its function is as follows. Aerial growth, conidiation, and dispersal of filamentous fungi in the environment rely upon a capability of their secreting small amphipathic proteins called hydrophobins (HPBs) with low sequence identity. Class I can self-assemble into an outermost layer of rodlet bundles on aerial cell surfaces, conferring cellular hydrophobicity that supports fungal growth, development and dispersal; whereas Class II form highly ordered films at water-air interfaces through intermolecular interactions but contribute nothing to the rodlet structure. HYD2 is a class II hydrophobin that contributes to the fruiting body development. The chain is Class II hydrophobin 2 from Cordyceps militaris (Caterpillar fungus).